The chain runs to 428 residues: 3-phosphoshikimate 1-carboxyvinyltransferase (428 aa).

Positions 20, 21, and 25 each coordinate 3-phosphoshikimate. Residue Lys20 coordinates phosphoenolpyruvate. 2 residues coordinate phosphoenolpyruvate: Gly92 and Arg120. 4 residues coordinate 3-phosphoshikimate: Ser166, Gln168, Asp314, and Lys341. A phosphoenolpyruvate-binding site is contributed by Gln168. Asp314 serves as the catalytic Proton acceptor. Phosphoenolpyruvate-binding residues include Arg345 and Arg387.

It belongs to the EPSP synthase family. In terms of assembly, monomer.

It localises to the cytoplasm. It carries out the reaction 3-phosphoshikimate + phosphoenolpyruvate = 5-O-(1-carboxyvinyl)-3-phosphoshikimate + phosphate. It functions in the pathway metabolic intermediate biosynthesis; chorismate biosynthesis; chorismate from D-erythrose 4-phosphate and phosphoenolpyruvate: step 6/7. Catalyzes the transfer of the enolpyruvyl moiety of phosphoenolpyruvate (PEP) to the 5-hydroxyl of shikimate-3-phosphate (S3P) to produce enolpyruvyl shikimate-3-phosphate and inorganic phosphate. In Listeria monocytogenes serotype 4a (strain HCC23), this protein is 3-phosphoshikimate 1-carboxyvinyltransferase.